A 333-amino-acid chain; its full sequence is 4-hydroxyproline epimerase (333 aa).

The Proton acceptor role is filled by cysteine 90. Residues 91 to 92 (GH) and aspartate 249 contribute to the substrate site. The active-site Proton donor is cysteine 253. 254–255 (GT) contributes to the substrate binding site.

It belongs to the proline racemase family. As to quaternary structure, homodimer.

It carries out the reaction trans-4-hydroxy-L-proline = cis-4-hydroxy-D-proline. Allows intracellular utilization of 4-hydroxyproline, one of the major constituents of host collagen, by converting 4-hydroxy-L-proline to 4-hydroxy-D-proline, which can be further metabolized by intracellular 4-hydroxy-D-proline oxidases. Strong B-cell mitogen. Plays an important role in the regulation of intra- and extracellular amino acid pools, allowing the bacterium to profit from host precursors and enzymatic pathways. This chain is 4-hydroxyproline epimerase, found in Brucella suis (strain ATCC 23445 / NCTC 10510).